A 345-amino-acid polypeptide reads, in one-letter code: Phosphoribosylformylglycinamidine cyclo-ligase (345 aa).

It belongs to the AIR synthase family.

It localises to the cytoplasm. It catalyses the reaction 2-formamido-N(1)-(5-O-phospho-beta-D-ribosyl)acetamidine + ATP = 5-amino-1-(5-phospho-beta-D-ribosyl)imidazole + ADP + phosphate + H(+). It participates in purine metabolism; IMP biosynthesis via de novo pathway; 5-amino-1-(5-phospho-D-ribosyl)imidazole from N(2)-formyl-N(1)-(5-phospho-D-ribosyl)glycinamide: step 2/2. The protein is Phosphoribosylformylglycinamidine cyclo-ligase of Shewanella amazonensis (strain ATCC BAA-1098 / SB2B).